The chain runs to 378 residues: tRNA-specific 2-thiouridylase MnmA (378 aa).

Residues 14 to 21 and Leu-40 contribute to the ATP site; that span reads AMSGGVDS. Cys-109 serves as the catalytic Nucleophile. The cysteines at positions 109 and 208 are disulfide-linked. Gly-133 lines the ATP pocket. The segment at 156 to 158 is interaction with tRNA; sequence KDQ. Residue Cys-208 is the Cysteine persulfide intermediate of the active site.

Belongs to the MnmA/TRMU family.

The protein localises to the cytoplasm. The catalysed reaction is S-sulfanyl-L-cysteinyl-[protein] + uridine(34) in tRNA + AH2 + ATP = 2-thiouridine(34) in tRNA + L-cysteinyl-[protein] + A + AMP + diphosphate + H(+). Its function is as follows. Catalyzes the 2-thiolation of uridine at the wobble position (U34) of tRNA, leading to the formation of s(2)U34. This Streptomyces griseus subsp. griseus (strain JCM 4626 / CBS 651.72 / NBRC 13350 / KCC S-0626 / ISP 5235) protein is tRNA-specific 2-thiouridylase MnmA.